The primary structure comprises 925 residues: Bifunctional glutamine synthetase adenylyltransferase/adenylyl-removing enzyme (925 aa).

Residues 1–426 (MTDASDLLSL…AQFDQVFADK (426 aa)) are adenylyl removase. Residues 436-925 (DQAAGCIWSG…AALWARVFGA (490 aa)) are adenylyl transferase.

It belongs to the GlnE family. It depends on Mg(2+) as a cofactor.

The catalysed reaction is [glutamine synthetase]-O(4)-(5'-adenylyl)-L-tyrosine + phosphate = [glutamine synthetase]-L-tyrosine + ADP. It carries out the reaction [glutamine synthetase]-L-tyrosine + ATP = [glutamine synthetase]-O(4)-(5'-adenylyl)-L-tyrosine + diphosphate. In terms of biological role, involved in the regulation of glutamine synthetase GlnA, a key enzyme in the process to assimilate ammonia. When cellular nitrogen levels are high, the C-terminal adenylyl transferase (AT) inactivates GlnA by covalent transfer of an adenylyl group from ATP to specific tyrosine residue of GlnA, thus reducing its activity. Conversely, when nitrogen levels are low, the N-terminal adenylyl removase (AR) activates GlnA by removing the adenylyl group by phosphorolysis, increasing its activity. The regulatory region of GlnE binds the signal transduction protein PII (GlnB) which indicates the nitrogen status of the cell. This chain is Bifunctional glutamine synthetase adenylyltransferase/adenylyl-removing enzyme, found in Burkholderia mallei (strain ATCC 23344).